The primary structure comprises 83 residues: Apolipoprotein C-I, acidic form (83 aa).

An N-terminal signal peptide occupies residues 1 to 26 (MRLFLSLPVLVVVLSMVLEGPAPAQG).

Belongs to the apolipoprotein C1 family.

It localises to the secreted. The protein is Apolipoprotein C-I, acidic form (APOC1A) of Gorilla gorilla gorilla (Western lowland gorilla).